Here is a 205-residue protein sequence, read N- to C-terminus: MIGRLRGVLVEKQAPEILLEVAGLGYEVQMPLTSFYELPDLNQEAQIYTHFVVREDAQLLYGFITKQERALFRLLIKTNGVGPKLGLTILSGMTAGEFVACVERDDIATLVKLPGVGKKTAERLLVEMRDKLKSLLETSAGSEREFMLKSNYTPAPVVNTAEEDAIAALLSLGYKPAQASKAVSAAFKEGMSSEDLIKSSLKSML.

A domain I region spans residues 1 to 64 (MIGRLRGVLV…EDAQLLYGFI (64 aa)). Residues 65–143 (TKQERALFRL…SLLETSAGSE (79 aa)) form a domain II region. The segment at 144–156 (REFMLKSNYTPAP) is flexible linker. The tract at residues 157–205 (VVNTAEEDAIAALLSLGYKPAQASKAVSAAFKEGMSSEDLIKSSLKSML) is domain III.

This sequence belongs to the RuvA family. Homotetramer. Forms an RuvA(8)-RuvB(12)-Holliday junction (HJ) complex. HJ DNA is sandwiched between 2 RuvA tetramers; dsDNA enters through RuvA and exits via RuvB. An RuvB hexamer assembles on each DNA strand where it exits the tetramer. Each RuvB hexamer is contacted by two RuvA subunits (via domain III) on 2 adjacent RuvB subunits; this complex drives branch migration. In the full resolvosome a probable DNA-RuvA(4)-RuvB(12)-RuvC(2) complex forms which resolves the HJ.

It localises to the cytoplasm. Functionally, the RuvA-RuvB-RuvC complex processes Holliday junction (HJ) DNA during genetic recombination and DNA repair, while the RuvA-RuvB complex plays an important role in the rescue of blocked DNA replication forks via replication fork reversal (RFR). RuvA specifically binds to HJ cruciform DNA, conferring on it an open structure. The RuvB hexamer acts as an ATP-dependent pump, pulling dsDNA into and through the RuvAB complex. HJ branch migration allows RuvC to scan DNA until it finds its consensus sequence, where it cleaves and resolves the cruciform DNA. The sequence is that of Holliday junction branch migration complex subunit RuvA from Shewanella woodyi (strain ATCC 51908 / MS32).